The chain runs to 521 residues: MRMYYSRLKLASVLGVCLLGLLLCLPNGMRKPFPSIPWRQIHLGLDLRGGSYLLMQVDLKSLTHDRLQTLAENTRDTLLKSQLGYQNINVDADKNTVSFQPRDAAEADTDVATLDKLPRVVPNEFSVKKQDDGTIALVLSADAIKARAREAVTQSIEIVRRRIDGTGAVDPEITRQGDDRIVVELPGISDPERIKALLGTTAKMTFRLVDSNPLHATYPPPGVSLVPMANPAEGGPLPVFDHVDVDGTDLTNAGAVIDQQTGEWAVSFSFDSVGTRAFSSVTQTNVGKRFAIVLDNKVIEAPVIRTPITGGNGQITGGFDAQKATDLALMLRAGALPAPLSVVEQRSIGPSLGADSIRAGILSLGVGFLLVVVFMVLFYGRFGWYADIALLANLVLMVAILSLFEATLTLPGMAGMLLTLGMAVDANILINERIREEVARGRTPLAAMQTGFERATSTIVDSNATAFLAHVMLFVFGTGPVRGFALTITIGIATTLFTTLLLSRMLMARWYARTRPASLPV.

Helical transmembrane passes span 8-28 (LKLASVLGVCLLGLLLCLPNG), 359-379 (AGILSLGVGFLLVVVFMVLFY), 388-408 (IALLANLVLMVAILSLFEATL), 410-430 (LPGMAGMLLTLGMAVDANILI), 459-479 (IVDSNATAFLAHVMLFVFGTG), and 483-503 (GFALTITIGIATTLFTTLLLS).

Belongs to the SecD/SecF family. SecD subfamily. In terms of assembly, forms a complex with SecF. Part of the essential Sec protein translocation apparatus which comprises SecA, SecYEG and auxiliary proteins SecDF-YajC and YidC.

It is found in the cell inner membrane. Functionally, part of the Sec protein translocase complex. Interacts with the SecYEG preprotein conducting channel. SecDF uses the proton motive force (PMF) to complete protein translocation after the ATP-dependent function of SecA. The sequence is that of Protein translocase subunit SecD from Acetobacter pasteurianus (strain NBRC 105184 / IFO 3283-01).